The sequence spans 1211 residues: A disintegrin and metalloproteinase with thrombospondin motifs 2 (1211 aa).

The N-terminal stretch at 1-29 is a signal peptide; the sequence is MDPPAGAARRLLCPALLLLLLLLPPPLLP. The propeptide occupies 30–253; the sequence is PPPPPANARL…GVLEEHANSS (224 aa). N-linked (GlcNAc...) asparagine glycans are attached at residues N112 and N251. The region spanning 266 to 470 is the Peptidase M12B domain; that stretch reads YNIEVLLGVD…HSYDCLLDDP (205 aa). Cystine bridges form between C343/C392, C386/C465, C425/C451, C492/C517, C503/C526, C512/C545, C539/C550, C573/C610, C577/C615, and C588/C600. H408 contributes to the Zn(2+) binding site. Residue E409 is part of the active site. Zn(2+)-binding residues include H412 and H418. The Disintegrin domain occupies 480–560; the sequence is QLPGLHYSMN…IWLTPDILKR (81 aa). A TSP type-1 1 domain is found at 561-616; the sequence is DGSWGAWSPFGSCSRTCGTGVKFRTRQCDNPHPANGGRTCSGLAYDFQLCSRQDCP. Positions 691 to 693 match the Cell attachment site motif; the sequence is RGD. Residues 723-851 form a spacer region; it reads KVVKGTFTRS…NVDDNNVLEE (129 aa). 3 TSP type-1 domains span residues 854–912, 914–971, and 975–1029; these read VVYE…NPQE, SQPV…RACS, and CPGR…GPCP. 2 N-linked (GlcNAc...) asparagine glycosylation sites follow: N949 and N993. 3 disulfide bridges follow: C987-C1023, C991-C1028, and C1002-C1012. The N-linked (GlcNAc...) asparagine glycan is linked to N1031. One can recognise a PLAC domain in the interval 1059–1097; that stretch reads SKGHCQGDKSIFCRMEVLSRYCSIPGYNKLCCKSCNLYN. N-linked (GlcNAc...) asparagine glycans are attached at residues N1098, N1145, and N1150. A disordered region spans residues 1170–1191; the sequence is LEDEVQPPNLIPRRPSPYEKTR.

In terms of assembly, may belong to a multimeric complex. Binds specifically to collagen type XIV. Requires Zn(2+) as cofactor. In terms of processing, the precursor is cleaved by a furin endopeptidase. Post-translationally, glycosylated. Can be O-fucosylated by POFUT2 on a serine or a threonine residue found within the consensus sequence C1-X(2)-(S/T)-C2-G of the TSP type-1 repeat domains where C1 and C2 are the first and second cysteine residue of the repeat, respectively. Fucosylated repeats can then be further glycosylated by the addition of a beta-1,3-glucose residue by the glucosyltransferase, B3GALTL. Fucosylation mediates the efficient secretion of ADAMTS family members. Can also be C-glycosylated with one or two mannose molecules on tryptophan residues within the consensus sequence W-X-X-W of the TPRs, and N-glycosylated. These other glycosylations can also facilitate secretion. Expressed at high level in skin, bone, tendon and aorta and at low levels in thymus and brain.

It is found in the secreted. The protein resides in the extracellular space. The protein localises to the extracellular matrix. The catalysed reaction is Cleaves the N-propeptide of collagen chain alpha1(I) at Pro-|-Gln and of alpha1(II) and alpha2(I) at Ala-|-Gln.. Cleaves the propeptides of type I and II collagen prior to fibril assembly. Does not act on type III collagen. Cleaves lysyl oxidase LOX at a site downstream of its propeptide cleavage site to produce a short LOX form with reduced collagen-binding activity. This chain is A disintegrin and metalloproteinase with thrombospondin motifs 2 (ADAMTS2), found in Homo sapiens (Human).